The primary structure comprises 311 residues: Pyrimidine-specific ribonucleoside hydrolase RihA (311 aa).

His240 is an active-site residue.

The protein belongs to the IUNH family. RihA subfamily.

Hydrolyzes with equal efficiency cytidine or uridine to ribose and cytosine or uracil, respectively. The protein is Pyrimidine-specific ribonucleoside hydrolase RihA of Escherichia coli O157:H7.